Consider the following 898-residue polypeptide: Phosphoenolpyruvate carboxylase (898 aa).

Residues His-138 and Lys-561 contribute to the active site.

Belongs to the PEPCase type 1 family. Requires Mg(2+) as cofactor.

The enzyme catalyses oxaloacetate + phosphate = phosphoenolpyruvate + hydrogencarbonate. In terms of biological role, forms oxaloacetate, a four-carbon dicarboxylic acid source for the tricarboxylic acid cycle. The chain is Phosphoenolpyruvate carboxylase from Streptococcus pneumoniae serotype 2 (strain D39 / NCTC 7466).